The sequence spans 186 residues: GTP cyclohydrolase 1 1 (186 aa).

Belongs to the GTP cyclohydrolase I family. Homomer.

The catalysed reaction is GTP + H2O = 7,8-dihydroneopterin 3'-triphosphate + formate + H(+). Its pathway is cofactor biosynthesis; 7,8-dihydroneopterin triphosphate biosynthesis; 7,8-dihydroneopterin triphosphate from GTP: step 1/1. The protein is GTP cyclohydrolase 1 1 (folE1) of Pseudomonas aeruginosa (strain ATCC 15692 / DSM 22644 / CIP 104116 / JCM 14847 / LMG 12228 / 1C / PRS 101 / PAO1).